An 84-amino-acid polypeptide reads, in one-letter code: Putative antitoxin VapB37 (84 aa).

Functionally, probable antitoxin component of a type II toxin-antitoxin (TA) system. Its putative cognate toxin is VapC37. The polypeptide is Putative antitoxin VapB37 (vapB37) (Mycobacterium tuberculosis (strain CDC 1551 / Oshkosh)).